The primary structure comprises 79 residues: Cell division protein ZapB (79 aa).

Positions Phe-6 to Glu-78 form a coiled coil.

Belongs to the ZapB family. In terms of assembly, homodimer. The ends of the coiled-coil dimer bind to each other, forming polymers. Interacts with FtsZ.

The protein resides in the cytoplasm. In terms of biological role, non-essential, abundant cell division factor that is required for proper Z-ring formation. It is recruited early to the divisome by direct interaction with FtsZ, stimulating Z-ring assembly and thereby promoting cell division earlier in the cell cycle. Its recruitment to the Z-ring requires functional FtsA or ZipA. In Yersinia pseudotuberculosis serotype O:1b (strain IP 31758), this protein is Cell division protein ZapB.